The chain runs to 370 residues: Leucine-rich repeat and transmembrane domain-containing protein 2 (370 aa).

The first 35 residues, 1–35 (MLAPGSSPGQRGRLALQWRQVSWITCWIALYAVEA), serve as a signal peptide directing secretion. Residues 36–68 (LPTCPFSCKCDSRSLEVDCSGLGLTTVPPDVPA) enclose the LRRNT domain. Residues 36-310 (LPTCPFSCKC…PASVRRAMGT (275 aa)) lie on the Extracellular side of the membrane. LRR repeat units lie at residues 69–90 (ATRT…AFAN), 93–114 (SLQR…IFGD), 117–139 (NLTE…LRHS), 141–162 (LLRH…LFDG), and 165–186 (ALRS…TFEP). Asn-90 carries an N-linked (GlcNAc...) asparagine glycan. 2 N-linked (GlcNAc...) asparagine glycosylation sites follow: Asn-117 and Asn-125. The LRRCT domain maps to 198-252 (NPWECDCNLREFKHWMEWFSYRGGRLDQLACTLPKELRGKDMRMVPMEMFNYCSQ). The N-linked (GlcNAc...) asparagine glycan is linked to Asn-257. A disordered region spans residues 261–300 (GLDIPGPPCTKASPEPAKPKPGAEPEPEPSTACPQKQRHR). A helical membrane pass occupies residues 311-331 (VIIAGVVCGVVCIMMVVAAAY). Topologically, residues 332–370 (GCIYASLMAKYHRELKKRQPLMGDPEGEHEDQKQISSVA) are cytoplasmic. The interval 351 to 370 (PLMGDPEGEHEDQKQISSVA) is disordered.

It is found in the membrane. The protein is Leucine-rich repeat and transmembrane domain-containing protein 2 (LRTM2) of Homo sapiens (Human).